A 192-amino-acid polypeptide reads, in one-letter code: NAD(P)H-quinone oxidoreductase subunit J, organellar chromatophore (192 aa).

It belongs to the complex I 30 kDa subunit family. As to quaternary structure, NDH is composed of at least 16 different subunits, 5 of which are encoded in the nucleus.

The protein resides in the plastid. Its subcellular location is the organellar chromatophore thylakoid membrane. It catalyses the reaction a quinone + NADH + H(+) = a quinol + NAD(+). Its function is as follows. NDH-1 shuttles electrons from NADH, via FMN and iron-sulfur (Fe-S) centers, to quinones in the respiratory chain. Couples the redox reaction to proton translocation (for every two electrons transferred, four hydrogen ions are translocated across the cytoplasmic membrane), and thus conserves the redox energy in a proton gradient. The chain is NAD(P)H-quinone oxidoreductase subunit J, organellar chromatophore from Paulinella chromatophora.